Consider the following 715-residue polypeptide: Fatty acid oxidation complex subunit alpha (715 aa).

The tract at residues 1–190 (MIYEGKAITV…KVGAVDAVVA (190 aa)) is enoyl-CoA hydratase/isomerase. D297 lines the substrate pocket. Residues 312–715 (HDVKQAAVLG…MAKNGQRFFN (404 aa)) form a 3-hydroxyacyl-CoA dehydrogenase region. Residues M325, D344, 401–403 (VVE), K408, and S430 contribute to the NAD(+) site. H451 acts as the For 3-hydroxyacyl-CoA dehydrogenase activity in catalysis. N454 contributes to the NAD(+) binding site. Substrate contacts are provided by N501 and Y660.

It in the N-terminal section; belongs to the enoyl-CoA hydratase/isomerase family. In the C-terminal section; belongs to the 3-hydroxyacyl-CoA dehydrogenase family. As to quaternary structure, heterotetramer of two alpha chains (FadB) and two beta chains (FadA).

The catalysed reaction is a (3S)-3-hydroxyacyl-CoA + NAD(+) = a 3-oxoacyl-CoA + NADH + H(+). It carries out the reaction a (3S)-3-hydroxyacyl-CoA = a (2E)-enoyl-CoA + H2O. It catalyses the reaction a 4-saturated-(3S)-3-hydroxyacyl-CoA = a (3E)-enoyl-CoA + H2O. The enzyme catalyses (3S)-3-hydroxybutanoyl-CoA = (3R)-3-hydroxybutanoyl-CoA. The catalysed reaction is a (3Z)-enoyl-CoA = a 4-saturated (2E)-enoyl-CoA. It carries out the reaction a (3E)-enoyl-CoA = a 4-saturated (2E)-enoyl-CoA. The protein operates within lipid metabolism; fatty acid beta-oxidation. In terms of biological role, involved in the aerobic and anaerobic degradation of long-chain fatty acids via beta-oxidation cycle. Catalyzes the formation of 3-oxoacyl-CoA from enoyl-CoA via L-3-hydroxyacyl-CoA. It can also use D-3-hydroxyacyl-CoA and cis-3-enoyl-CoA as substrate. The chain is Fatty acid oxidation complex subunit alpha from Pseudomonas putida (strain ATCC 47054 / DSM 6125 / CFBP 8728 / NCIMB 11950 / KT2440).